A 183-amino-acid polypeptide reads, in one-letter code: Probable apo-citrate lyase phosphoribosyl-dephospho-CoA transferase (183 aa).

It belongs to the CitX family.

It carries out the reaction apo-[citrate lyase ACP] + 2'-(5''-triphospho-alpha-D-ribosyl)-3'-dephospho-CoA = holo-[citrate lyase ACP] + diphosphate. In terms of biological role, transfers 2-(5''-triphosphoribosyl)-3'-dephosphocoenzyme-A on a serine residue to the apo-acyl carrier protein (gamma chain) of the citrate lyase to yield holo-acyl carrier protein. This chain is Probable apo-citrate lyase phosphoribosyl-dephospho-CoA transferase, found in Escherichia coli (strain 55989 / EAEC).